The primary structure comprises 26 residues: AMP deaminase 1 (26 aa).

Belongs to the metallo-dependent hydrolases superfamily. Adenosine and AMP deaminases family. As to quaternary structure, homotetramer. Requires Zn(2+) as cofactor.

It catalyses the reaction AMP + H2O + H(+) = IMP + NH4(+). It functions in the pathway purine metabolism; IMP biosynthesis via salvage pathway; IMP from AMP: step 1/1. Functionally, AMP deaminase plays a critical role in energy metabolism. This is AMP deaminase 1 (AMPD1) from Oryctolagus cuniculus (Rabbit).